The chain runs to 323 residues: tRNA U34 carboxymethyltransferase (323 aa).

Carboxy-S-adenosyl-L-methionine is bound by residues lysine 93, tryptophan 107, lysine 112, glycine 132, 154 to 156, 182 to 183, methionine 197, tyrosine 201, and arginine 316; these read DPS and VE.

The protein belongs to the class I-like SAM-binding methyltransferase superfamily. CmoB family. In terms of assembly, homotetramer.

The enzyme catalyses carboxy-S-adenosyl-L-methionine + 5-hydroxyuridine(34) in tRNA = 5-carboxymethoxyuridine(34) in tRNA + S-adenosyl-L-homocysteine + H(+). Its function is as follows. Catalyzes carboxymethyl transfer from carboxy-S-adenosyl-L-methionine (Cx-SAM) to 5-hydroxyuridine (ho5U) to form 5-carboxymethoxyuridine (cmo5U) at position 34 in tRNAs. The chain is tRNA U34 carboxymethyltransferase from Pseudoalteromonas atlantica (strain T6c / ATCC BAA-1087).